The primary structure comprises 429 residues: Enolase (429 aa).

Gln168 is a binding site for (2R)-2-phosphoglycerate. Catalysis depends on Glu210, which acts as the Proton donor. Mg(2+)-binding residues include Asp247, Glu288, and Asp315. 4 residues coordinate (2R)-2-phosphoglycerate: Lys340, Arg369, Ser370, and Lys391. The active-site Proton acceptor is the Lys340.

Belongs to the enolase family. Mg(2+) serves as cofactor.

It localises to the cytoplasm. The protein resides in the secreted. Its subcellular location is the cell surface. The catalysed reaction is (2R)-2-phosphoglycerate = phosphoenolpyruvate + H2O. The protein operates within carbohydrate degradation; glycolysis; pyruvate from D-glyceraldehyde 3-phosphate: step 4/5. Its function is as follows. Catalyzes the reversible conversion of 2-phosphoglycerate (2-PG) into phosphoenolpyruvate (PEP). It is essential for the degradation of carbohydrates via glycolysis. This Nostoc punctiforme (strain ATCC 29133 / PCC 73102) protein is Enolase.